A 280-amino-acid chain; its full sequence is Homeobox protein SMOX-1 (280 aa).

Residues 61–88 form a disordered region; it reads PNNNSFQLNTTNDSNNNNTTNNGNDSRS. Positions 69–85 are enriched in low complexity; the sequence is NTTNDSNNNNTTNNGND. The Antp-type hexapeptide signature appears at 214–219; sequence VYPWMN. The homeobox DNA-binding region spans 229 to 280; sequence QKRTRQTYTRYQTLELEKEFHFNKYLTRRRRIEIAHTLTLTERQIKIWFQNR.

It belongs to the Antp homeobox family.

The protein resides in the nucleus. This Schistosoma mansoni (Blood fluke) protein is Homeobox protein SMOX-1 (SMOX-1).